Here is a 344-residue protein sequence, read N- to C-terminus: MEKNTAPFVVDTAPTTPPDKLVAPSIEEVNSNPNELRALRGQGRYFGVSDDDKDAIKEAAPKCNNCSQRGHLKKDCPHIICSYCGATDDHYSRHCPKAIQCSKCDEVGHYRSQCPHKWKKVQCTLCKSKKHSKERCPSIWRAYILVDDNEKAKPKVLPFHTIYCYNCGGKGHFGDDCKEKRSSRVPNEDGSAFTGSNLSVELKQEYYRHMNRNSDENEDYQFSESIYDEDPLPRPSHKRHSQNDHSHSGRNKRRASNFHPPPYQKSNVIQPTIRGETLSLNNNISKNSRYQNTKVNVSSISENMYGSRYNPSTYVDNNSISNSSNYRNYNSYQPYRSGTLGKRR.

Positions 1 to 23 are disordered; that stretch reads MEKNTAPFVVDTAPTTPPDKLVA. A phosphoserine mark is found at serine 31 and serine 49. 3 CCHC-type zinc fingers span residues 61 to 78, 99 to 116, and 162 to 179; these read PKCN…DCPH, IQCS…QCPH, and IYCY…DCKE. 2 disordered regions span residues 227–274 and 312–344; these read YDED…PTIR and STYV…GKRR. Positions 317-337 are enriched in low complexity; the sequence is NNSISNSSNYRNYNSYQPYRS.

Belongs to the AIR1 family. As to quaternary structure, component of the TRAMP complex (also called TRF4 complex) composed of at least HUL4, MTR4, PAP2/TRF4 and either AIR1 or AIR2. Interacts with HMT1 and NPL3. The interaction with NPL3 requires the presence of HMT1. Interacts directly with PAP2.

The protein resides in the nucleus. Functionally, component of the TRAMP (TRF4) complex which has a poly(A) RNA polymerase activity and is involved in a post-transcriptional quality control mechanism limiting inappropriate expression of genetic information. Polyadenylation is required for the degradative activity of the exosome on several of its nuclear RNA substrates like cryptic transcripts generated by RNA polymerase II and III, or hypomethylated pre-tRNAi-Met. Both complexes polyadenylate RNA processing and degradation intermediates of snRNAs, snoRNAs and mRNAs that accumulate in strains lacking a functional exosome. AIR2 also inhibits the methylation of NPL3 mediated by HMT1 through its interaction with HMT1. The protein is Protein AIR2 (AIR2) of Saccharomyces cerevisiae (strain ATCC 204508 / S288c) (Baker's yeast).